We begin with the raw amino-acid sequence, 163 residues long: Cytochrome b6-f complex subunit 4 (163 aa).

The next 3 helical transmembrane spans lie at 36-56 (LLYIFPVVILGTIACNVGLAV), 95-115 (LLGVLLMVSVPTGLLTVPFLE), and 131-151 (TVFLIGTAVALWLGIGATLPI).

It belongs to the cytochrome b family. PetD subfamily. The 4 large subunits of the cytochrome b6-f complex are cytochrome b6, subunit IV (17 kDa polypeptide, petD), cytochrome f and the Rieske protein, while the 4 small subunits are petG, petL, petM and petN. The complex functions as a dimer.

It is found in the plastid. The protein localises to the chloroplast thylakoid membrane. Component of the cytochrome b6-f complex, which mediates electron transfer between photosystem II (PSII) and photosystem I (PSI), cyclic electron flow around PSI, and state transitions. The chain is Cytochrome b6-f complex subunit 4 from Drimys granadensis.